A 455-amino-acid chain; its full sequence is Protein YmfN (455 aa).

This sequence belongs to the phage terminase family.

The polypeptide is Protein YmfN (ymfN) (Escherichia coli (strain K12)).